The sequence spans 227 residues: Cytidylate kinase (227 aa).

An ATP-binding site is contributed by Gly12 to Thr20.

This sequence belongs to the cytidylate kinase family. Type 1 subfamily.

The protein resides in the cytoplasm. It carries out the reaction CMP + ATP = CDP + ADP. The enzyme catalyses dCMP + ATP = dCDP + ADP. This Salmonella typhimurium (strain LT2 / SGSC1412 / ATCC 700720) protein is Cytidylate kinase.